A 615-amino-acid polypeptide reads, in one-letter code: Extracellular metalloproteinase 1 (615 aa).

The N-terminal stretch at 1-8 (SLPLHVLA) is a signal peptide. A propeptide spanning residues 9–235 (HPQPSTSTSL…VHNVVDYVAH (227 aa)) is cleaved from the precursor. A glycan (N-linked (GlcNAc...) asparagine) is linked at Asn-276. His-419 contributes to the Zn(2+) binding site. The active site involves Glu-420. His-423 serves as a coordination point for Zn(2+). 3 N-linked (GlcNAc...) asparagine glycosylation sites follow: Asn-464, Asn-583, and Asn-612.

Belongs to the peptidase M36 family. Zn(2+) serves as cofactor.

The protein resides in the secreted. Functionally, secreted metalloproteinase probably acting as a virulence factor. The polypeptide is Extracellular metalloproteinase 1 (MEP1) (Trichophyton equinum (Horse ringworm fungus)).